The primary structure comprises 550 residues: Hydroxylamine reductase (550 aa).

Residues cysteine 3, cysteine 6, cysteine 18, and cysteine 25 each contribute to the [2Fe-2S] cluster site. Histidine 249, glutamate 273, cysteine 317, cysteine 405, cysteine 433, cysteine 458, glutamate 492, and lysine 494 together coordinate hybrid [4Fe-2O-2S] cluster. Cysteine 405 carries the post-translational modification Cysteine persulfide.

Belongs to the HCP family. It depends on [2Fe-2S] cluster as a cofactor. The cofactor is hybrid [4Fe-2O-2S] cluster.

It is found in the cytoplasm. It carries out the reaction A + NH4(+) + H2O = hydroxylamine + AH2 + H(+). Functionally, catalyzes the reduction of hydroxylamine to form NH(3) and H(2)O. This chain is Hydroxylamine reductase, found in Escherichia coli O6:H1 (strain CFT073 / ATCC 700928 / UPEC).